A 284-amino-acid polypeptide reads, in one-letter code: Nucleotide-binding protein Pput_0988 (284 aa).

8 to 15 (GRSGSGKS) is a binding site for ATP. Residue 60-63 (DARN) coordinates GTP.

Belongs to the RapZ-like family.

Displays ATPase and GTPase activities. In Pseudomonas putida (strain ATCC 700007 / DSM 6899 / JCM 31910 / BCRC 17059 / LMG 24140 / F1), this protein is Nucleotide-binding protein Pput_0988.